Here is a 420-residue protein sequence, read N- to C-terminus: Probable ABC transporter-binding protein DR_1438 (420 aa).

Positions 1-24 (MKKFAAVLGLTVAFAAASQAHAVT) are cleaved as a signal peptide.

Belongs to the bacterial solute-binding protein 1 family.

Probably part of a binding-protein-dependent transport system. In Deinococcus radiodurans (strain ATCC 13939 / DSM 20539 / JCM 16871 / CCUG 27074 / LMG 4051 / NBRC 15346 / NCIMB 9279 / VKM B-1422 / R1), this protein is Probable ABC transporter-binding protein DR_1438.